A 254-amino-acid chain; its full sequence is 5'-nucleotidase SurE (254 aa).

The a divalent metal cation site is built by Asp-8, Asp-9, Ser-40, and Asn-93.

It belongs to the SurE nucleotidase family. It depends on a divalent metal cation as a cofactor.

The protein localises to the cytoplasm. The enzyme catalyses a ribonucleoside 5'-phosphate + H2O = a ribonucleoside + phosphate. In terms of biological role, nucleotidase that shows phosphatase activity on nucleoside 5'-monophosphates. This Methylorubrum populi (strain ATCC BAA-705 / NCIMB 13946 / BJ001) (Methylobacterium populi) protein is 5'-nucleotidase SurE.